The sequence spans 513 residues: ATP synthase subunit alpha (513 aa).

169–176 (GDRQTGKS) contributes to the ATP binding site.

This sequence belongs to the ATPase alpha/beta chains family. F-type ATPases have 2 components, CF(1) - the catalytic core - and CF(0) - the membrane proton channel. CF(1) has five subunits: alpha(3), beta(3), gamma(1), delta(1), epsilon(1). CF(0) has three main subunits: a(1), b(2) and c(9-12). The alpha and beta chains form an alternating ring which encloses part of the gamma chain. CF(1) is attached to CF(0) by a central stalk formed by the gamma and epsilon chains, while a peripheral stalk is formed by the delta and b chains.

It is found in the cell inner membrane. The enzyme catalyses ATP + H2O + 4 H(+)(in) = ADP + phosphate + 5 H(+)(out). In terms of biological role, produces ATP from ADP in the presence of a proton gradient across the membrane. The alpha chain is a regulatory subunit. The protein is ATP synthase subunit alpha of Sodalis glossinidius (strain morsitans).